A 203-amino-acid chain; its full sequence is CASP-like protein 4B2 (203 aa).

The Cytoplasmic segment spans residues 1 to 57 (MAMVTADASAAADAATKQPDVEKDYSSYNGASTAGAGGGGVVESVVARWRREDMLDK). A helical membrane pass occupies residues 58–78 (CPLALHAAAAAFAFVALVLVA). Topologically, residues 79–92 (SNQHGDWMQFDRYQ) are extracellular. A helical transmembrane segment spans residues 93–113 (EYMYLLAIAALAFAYSLAQAL). The Cytoplasmic portion of the chain corresponds to 114 to 135 (RHAHRMRGGADPIPAPSARLFD). A helical transmembrane segment spans residues 136 to 156 (FIADQVVAYLLMSALSAAIPI). Residues 157-171 (TNRMRTAVINNFTDA) are Extracellular-facing. N-linked (GlcNAc...) asparagine glycosylation occurs at N167. The helical transmembrane segment at 172 to 192 (TAAAISMAFLAFVALALSATV) threads the bilayer. The Cytoplasmic segment spans residues 193–203 (SGYKLSRQMYM).

The protein belongs to the Casparian strip membrane proteins (CASP) family. As to quaternary structure, homodimer and heterodimers.

It is found in the cell membrane. In Hordeum vulgare subsp. vulgare (Domesticated barley), this protein is CASP-like protein 4B2.